The chain runs to 201 residues: 3-isopropylmalate dehydratase small subunit (201 aa).

The protein belongs to the LeuD family. LeuD type 1 subfamily. In terms of assembly, heterodimer of LeuC and LeuD.

The catalysed reaction is (2R,3S)-3-isopropylmalate = (2S)-2-isopropylmalate. It participates in amino-acid biosynthesis; L-leucine biosynthesis; L-leucine from 3-methyl-2-oxobutanoate: step 2/4. In terms of biological role, catalyzes the isomerization between 2-isopropylmalate and 3-isopropylmalate, via the formation of 2-isopropylmaleate. The polypeptide is 3-isopropylmalate dehydratase small subunit (Sinorhizobium fredii (strain NBRC 101917 / NGR234)).